A 603-amino-acid polypeptide reads, in one-letter code: Elongation factor 4 (603 aa).

The region spanning 7–189 (SRLRNFCIIA…AVVDRIPSPK (183 aa)) is the tr-type G domain. GTP-binding positions include 19–24 (DHGKST) and 136–139 (NKVD).

The protein belongs to the TRAFAC class translation factor GTPase superfamily. Classic translation factor GTPase family. LepA subfamily.

It localises to the cell inner membrane. It carries out the reaction GTP + H2O = GDP + phosphate + H(+). In terms of biological role, required for accurate and efficient protein synthesis under certain stress conditions. May act as a fidelity factor of the translation reaction, by catalyzing a one-codon backward translocation of tRNAs on improperly translocated ribosomes. Back-translocation proceeds from a post-translocation (POST) complex to a pre-translocation (PRE) complex, thus giving elongation factor G a second chance to translocate the tRNAs correctly. Binds to ribosomes in a GTP-dependent manner. This is Elongation factor 4 from Prochlorococcus marinus (strain NATL1A).